The following is a 438-amino-acid chain: Dihydrolipoyllysine-residue acetyltransferase component of pyruvate dehydrogenase complex (438 aa).

In terms of domain architecture, Lipoyl-binding spans 1–76; it reads MFKVKFADIG…KVGDVVMEIE (76 aa). At Lys42 the chain carries N6-lipoyllysine. In terms of domain architecture, Peripheral subunit-binding (PSBD) spans 132 to 169; that stretch reads KATPLARKVAADLNIDLSLVTPTGPNQRILVADIKNHQ. Polar residues predominate over residues 172–181; it reads STQLASQPIS. The disordered stretch occupies residues 172–192; that stretch reads STQLASQPISQPAPTPSPSAH. Residue His411 is part of the active site.

This sequence belongs to the 2-oxoacid dehydrogenase family. As to quaternary structure, forms a 24-polypeptide structural core with octahedral symmetry. It depends on (R)-lipoate as a cofactor.

The enzyme catalyses N(6)-[(R)-dihydrolipoyl]-L-lysyl-[protein] + acetyl-CoA = N(6)-[(R)-S(8)-acetyldihydrolipoyl]-L-lysyl-[protein] + CoA. The pyruvate dehydrogenase complex catalyzes the overall conversion of pyruvate to acetyl-CoA and CO(2). It contains multiple copies of three enzymatic components: pyruvate dehydrogenase (E1), dihydrolipoamide acetyltransferase (E2) and lipoamide dehydrogenase (E3). This is Dihydrolipoyllysine-residue acetyltransferase component of pyruvate dehydrogenase complex (pdhC) from Mycoplasma capricolum subsp. capricolum (strain California kid / ATCC 27343 / NCTC 10154).